The sequence spans 399 residues: MIASKESNSAATPATSAPTLRTTAEIAATAAMGHAPHETFTINLGPQHPAAHGVLRVLMRMDGEWVENAEPVIGYIHRMHEKMGENRTWAKFLPNTSRIDYLSAMHYTHAWVGVVERGLKIEVPERAEYIRVITSELNRIASHQVWWGALLLDLGGFTPILYAFDDREKILDLLEGLCGARLTYCYYRFGGLYNDADDDFLKGTREFVKYMRPRLKMYRDLVTDNVILRQRLTGIGPISADTCRKYGATGPVIRGSGVAYDVRRAEPYSVYPKLQFKIPTYPECDSMARYLVRMDEMEESLNIIEQCLDLIQPGPFMAPKVPRVIRLPAGDYTYAVEAARGRFMVRVVSDGKENPYRARLRTPSFGNLSLFEETSRGMLLPDALAMMGSLDLVIPDIDR.

Residues 1 to 20 form a disordered region; that stretch reads MIASKESNSAATPATSAPTL. The span at 9 to 20 shows a compositional bias: low complexity; it reads SAATPATSAPTL.

The protein belongs to the complex I 49 kDa subunit family. In terms of assembly, NDH-1 is composed of 14 different subunits. Subunits NuoB, C, D, E, F, and G constitute the peripheral sector of the complex.

It localises to the cell inner membrane. It catalyses the reaction a quinone + NADH + 5 H(+)(in) = a quinol + NAD(+) + 4 H(+)(out). NDH-1 shuttles electrons from NADH, via FMN and iron-sulfur (Fe-S) centers, to quinones in the respiratory chain. The immediate electron acceptor for the enzyme in this species is believed to be ubiquinone. Couples the redox reaction to proton translocation (for every two electrons transferred, four hydrogen ions are translocated across the cytoplasmic membrane), and thus conserves the redox energy in a proton gradient. The protein is NADH-quinone oxidoreductase subunit D 2 of Opitutus terrae (strain DSM 11246 / JCM 15787 / PB90-1).